The primary structure comprises 419 residues: Synaptosomal-associated protein 47 (419 aa).

2 consecutive t-SNARE coiled-coil homology domains span residues 108-170 and 356-418; these read PQGA…LSEL and VLQP…MRKL.

It belongs to the SVAP1 family.

In terms of biological role, may play a role in intracellular membrane fusion. This chain is Synaptosomal-associated protein 47 (snap47), found in Danio rerio (Zebrafish).